The following is a 155-amino-acid chain: MLLAGGEAREIVVDGSGMIMGRLASVVAKLLLAGWRVNVVNAEKIVLSGDPRMVVESYRTTVLGVKSHFSHKWRPKRPRTPQRLFKHAVRGMLPKNKARGRRALARLRVYVGVPDELKGREFVRFPEADASRLSSHYIELGAVARQLGWKGGVEK.

It belongs to the universal ribosomal protein uL13 family. In terms of assembly, part of the 50S ribosomal subunit.

This protein is one of the early assembly proteins of the 50S ribosomal subunit, although it is not seen to bind rRNA by itself. It is important during the early stages of 50S assembly. The polypeptide is Large ribosomal subunit protein uL13 (Aeropyrum pernix (strain ATCC 700893 / DSM 11879 / JCM 9820 / NBRC 100138 / K1)).